A 297-amino-acid chain; its full sequence is Phosphatidylglycerol--prolipoprotein diacylglyceryl transferase (297 aa).

3 helical membrane passes run 17–37, 59–79, and 97–117; these read LAVR…IVVG, MLFY…VLFY, and GGMS…LFAW. An a 1,2-diacyl-sn-glycero-3-phospho-(1'-sn-glycerol)-binding site is contributed by arginine 142. 2 helical membrane-spanning segments follow: residues 230–250 and 257–277; these read MGAV…TVEF and FLGL…PMIV.

It belongs to the Lgt family.

Its subcellular location is the cell inner membrane. It carries out the reaction L-cysteinyl-[prolipoprotein] + a 1,2-diacyl-sn-glycero-3-phospho-(1'-sn-glycerol) = an S-1,2-diacyl-sn-glyceryl-L-cysteinyl-[prolipoprotein] + sn-glycerol 1-phosphate + H(+). Its pathway is protein modification; lipoprotein biosynthesis (diacylglyceryl transfer). Its function is as follows. Catalyzes the transfer of the diacylglyceryl group from phosphatidylglycerol to the sulfhydryl group of the N-terminal cysteine of a prolipoprotein, the first step in the formation of mature lipoproteins. In Burkholderia multivorans (strain ATCC 17616 / 249), this protein is Phosphatidylglycerol--prolipoprotein diacylglyceryl transferase.